The primary structure comprises 124 residues: Small ribosomal subunit protein uS12 (124 aa).

Position 89 is a 3-methylthioaspartic acid (D89). Residues 104 to 124 form a disordered region; sequence LQGVKDRKQSRSKYGAKRPKK. Residues 113–124 show a composition bias toward basic residues; it reads SRSKYGAKRPKK.

The protein belongs to the universal ribosomal protein uS12 family. As to quaternary structure, part of the 30S ribosomal subunit. Contacts proteins S8 and S17. May interact with IF1 in the 30S initiation complex.

With S4 and S5 plays an important role in translational accuracy. Its function is as follows. Interacts with and stabilizes bases of the 16S rRNA that are involved in tRNA selection in the A site and with the mRNA backbone. Located at the interface of the 30S and 50S subunits, it traverses the body of the 30S subunit contacting proteins on the other side and probably holding the rRNA structure together. The combined cluster of proteins S8, S12 and S17 appears to hold together the shoulder and platform of the 30S subunit. In Thiomonas delicata (Thiomonas cuprina), this protein is Small ribosomal subunit protein uS12.